A 72-amino-acid chain; its full sequence is Translation initiation factor IF-1 (72 aa).

The S1-like domain maps to 1–72 (MSKEEVLEFS…TKGRIIYRYK (72 aa)).

Belongs to the IF-1 family. In terms of assembly, component of the 30S ribosomal translation pre-initiation complex which assembles on the 30S ribosome in the order IF-2 and IF-3, IF-1 and N-formylmethionyl-tRNA(fMet); mRNA recruitment can occur at any time during PIC assembly.

It localises to the cytoplasm. In terms of biological role, one of the essential components for the initiation of protein synthesis. Stabilizes the binding of IF-2 and IF-3 on the 30S subunit to which N-formylmethionyl-tRNA(fMet) subsequently binds. Helps modulate mRNA selection, yielding the 30S pre-initiation complex (PIC). Upon addition of the 50S ribosomal subunit IF-1, IF-2 and IF-3 are released leaving the mature 70S translation initiation complex. This chain is Translation initiation factor IF-1, found in Bartonella henselae (strain ATCC 49882 / DSM 28221 / CCUG 30454 / Houston 1) (Rochalimaea henselae).